The sequence spans 231 residues: Ribonuclease P protein component 3 (231 aa).

The protein belongs to the eukaryotic/archaeal RNase P protein component 3 family. As to quaternary structure, consists of a catalytic RNA component and at least 4-5 protein subunits.

The protein resides in the cytoplasm. It carries out the reaction Endonucleolytic cleavage of RNA, removing 5'-extranucleotides from tRNA precursor.. In terms of biological role, part of ribonuclease P, a protein complex that generates mature tRNA molecules by cleaving their 5'-ends. In Methanococcus maripaludis (strain C5 / ATCC BAA-1333), this protein is Ribonuclease P protein component 3.